An 879-amino-acid polypeptide reads, in one-letter code: Putative ankyrin repeat protein L88 (879 aa).

ANK repeat units lie at residues 22 to 62 (KGFT…QKNK), 63 to 96 (KGYTALSIAVRNCGNWCSYKTVRILLEKGAKTNI), 100 to 133 (EGITPLIFASFNSRFCEGFNVINLLLKYGADINA), 137 to 170 (NGYTALMNASSNSNSSSTYTTVKLLLDNDANIDD), 174 to 207 (NGLTCLMHACNNVTLKSSIGTIELLLYYGADINA), 211 to 241 (NGRTALMHACDNSNNIELIELLLNRGADIEA), 245 to 278 (KGLTCLMIASKYAGSINSVEVVEILINRGANIEA), 282 to 313 (KLRTPLMYACKYSHNNTSVIKLLLDKGANIET), 317 to 347 (RNNTALILASTYSSSVEPIKLLLDKGANINH), 351 to 384 (EGCNALNLACINSSYNNNSEIVKLLIDRGSNINN), 387 to 420 (SERTILTSTCEFIGKGSNIDTVKILLDNNADPNI), 424 to 463 (NGNTTLLYMCKKYIKDGPKKRDLNFNVIKLLLDYKANPNF), 470 to 499 (NSLTRLSKYSDKVDIEIIKLLLDYGVDINS), 506 to 542 (SALLLFCMDLQNSCTKISYNCKNIVKLLLEKGADVNI), 546 to 578 (NGNTALSIICESDDNNLSDIIELLLAHNANPNT), 674 to 704 (SGITALLHECQVSDNIEPIKLLLDNGADPNI), and 708 to 738 (KGETALHKAVRHTNKIDVIKLLMDYHANPYI).

This Acanthamoeba polyphaga mimivirus (APMV) protein is Putative ankyrin repeat protein L88.